A 259-amino-acid polypeptide reads, in one-letter code: Methyltransferase afvD (259 aa).

Belongs to the class I-like SAM-binding methyltransferase superfamily.

The protein operates within secondary metabolite biosynthesis. Functionally, methyltransferase; part of the gene cluster that mediates the biosynthesis of aflavarin, a bicoumarin that exhibits anti-insectan activity against the fungivorous beetle C.hemipterus. In Aspergillus flavus (strain ATCC 200026 / FGSC A1120 / IAM 13836 / NRRL 3357 / JCM 12722 / SRRC 167), this protein is Methyltransferase afvD.